Consider the following 328-residue polypeptide: GTP 3',8-cyclase (328 aa).

One can recognise a Radical SAM core domain in the interval 1-229 (MNQVDYLRIS…ESQVRGAGPA (229 aa)). Residue Arg-8 coordinates GTP. Cys-15 and Cys-19 together coordinate [4Fe-4S] cluster. Tyr-21 is a binding site for S-adenosyl-L-methionine. Cys-22 contributes to the [4Fe-4S] cluster binding site. Residue Arg-60 participates in GTP binding. Gly-64 contributes to the S-adenosyl-L-methionine binding site. Thr-91 lines the GTP pocket. Residue Ser-115 participates in S-adenosyl-L-methionine binding. Residue Lys-155 coordinates GTP. Residue Met-189 coordinates S-adenosyl-L-methionine. Residues Cys-252 and Cys-255 each coordinate [4Fe-4S] cluster. 257–259 (RMR) provides a ligand contact to GTP. Cys-269 is a [4Fe-4S] cluster binding site.

The protein belongs to the radical SAM superfamily. MoaA family. Monomer and homodimer. It depends on [4Fe-4S] cluster as a cofactor.

It catalyses the reaction GTP + AH2 + S-adenosyl-L-methionine = (8S)-3',8-cyclo-7,8-dihydroguanosine 5'-triphosphate + 5'-deoxyadenosine + L-methionine + A + H(+). It functions in the pathway cofactor biosynthesis; molybdopterin biosynthesis. Its function is as follows. Catalyzes the cyclization of GTP to (8S)-3',8-cyclo-7,8-dihydroguanosine 5'-triphosphate. The polypeptide is GTP 3',8-cyclase (Nostoc punctiforme (strain ATCC 29133 / PCC 73102)).